We begin with the raw amino-acid sequence, 957 residues long: Glycine dehydrogenase (decarboxylating) (957 aa).

Position 708 is an N6-(pyridoxal phosphate)lysine (lysine 708).

This sequence belongs to the GcvP family. The glycine cleavage system is composed of four proteins: P, T, L and H. It depends on pyridoxal 5'-phosphate as a cofactor.

It carries out the reaction N(6)-[(R)-lipoyl]-L-lysyl-[glycine-cleavage complex H protein] + glycine + H(+) = N(6)-[(R)-S(8)-aminomethyldihydrolipoyl]-L-lysyl-[glycine-cleavage complex H protein] + CO2. In terms of biological role, the glycine cleavage system catalyzes the degradation of glycine. The P protein binds the alpha-amino group of glycine through its pyridoxal phosphate cofactor; CO(2) is released and the remaining methylamine moiety is then transferred to the lipoamide cofactor of the H protein. The chain is Glycine dehydrogenase (decarboxylating) from Enterobacter sp. (strain 638).